The following is a 451-amino-acid chain: Serine/threonine-protein phosphatase 2A 55 kDa regulatory subunit B delta isoform (451 aa).

WD repeat units lie at residues 30–69, 95–136, 179–217, 228–268, 287–325, 342–383, and 418–451; these read AEAD…KSRP, EIEE…KRAE, AHTY…RSFN, ELTE…LCDR, EIIS…RPVE, ENDC…DITL, and DFNK…DKIN.

This sequence belongs to the phosphatase 2A regulatory subunit B family. As to quaternary structure, PP2A consists of a common heterodimeric core enzyme, composed of a 36 kDa catalytic subunit (subunit C) and a 65 kDa constant regulatory subunit (PR65 or subunit A), that associates with a variety of regulatory subunits.

It localises to the cytoplasm. In terms of biological role, substrate-recognition subunit of protein phosphatase 2A (PP2A) that plays a key role in cell cycle by controlling mitosis entry and exit. The activity of PP2A complexes containing PPP2R2D (PR55-delta) fluctuate during the cell cycle: the activity is high in interphase and low in mitosis. This is Serine/threonine-protein phosphatase 2A 55 kDa regulatory subunit B delta isoform (PPP2R2D) from Gallus gallus (Chicken).